We begin with the raw amino-acid sequence, 204 residues long: Lysozyme G (204 aa).

Residues 1–19 (MHLMLVLLGLAALLGTSQS) form the signal peptide. Disulfide bonds link Cys-23–Cys-79 and Cys-37–Cys-48. Residues Glu-92 and Asp-105 contribute to the active site.

It belongs to the glycosyl hydrolase 23 family.

The protein localises to the secreted. It catalyses the reaction Hydrolysis of (1-&gt;4)-beta-linkages between N-acetylmuramic acid and N-acetyl-D-glucosamine residues in a peptidoglycan and between N-acetyl-D-glucosamine residues in chitodextrins.. Has bacteriolytic activity against M.luteus. This chain is Lysozyme G, found in Dromaius novaehollandiae (Emu).